Reading from the N-terminus, the 355-residue chain is Capsular polysaccharide biosynthesis glycosyltransferase CapH (355 aa).

The protein belongs to the glycosyltransferase group 1 family. Glycosyltransferase 4 subfamily.

Its pathway is capsule biogenesis; capsule polysaccharide biosynthesis. In terms of biological role, required for the biosynthesis of type 1 capsular polysaccharide. The polypeptide is Capsular polysaccharide biosynthesis glycosyltransferase CapH (capH) (Staphylococcus aureus).